The chain runs to 122 residues: Large ribosomal subunit protein uL14c (122 aa).

The protein belongs to the universal ribosomal protein uL14 family. In terms of assembly, part of the 50S ribosomal subunit.

It is found in the plastid. It localises to the chloroplast. In terms of biological role, binds to 23S rRNA. This chain is Large ribosomal subunit protein uL14c, found in Nicotiana tomentosiformis (Tobacco).